The chain runs to 384 residues: Glucose-fructose oxidoreductase domain-containing protein 2 (384 aa).

The first 25 residues, 1–25, serve as a signal peptide directing secretion; sequence MKTLPGIGVFGTGNTARVLISLLRA. The segment at 358–384 is disordered; that stretch reads GEWESVELTNDETDSNQNLSEVIQHNL. Polar residues predominate over residues 372–384; sequence SNQNLSEVIQHNL.

The protein belongs to the Gfo/Idh/MocA family.

The protein resides in the secreted. The protein localises to the extracellular space. It is found in the extracellular matrix. Functionally, promotes matrix assembly. The sequence is that of Glucose-fructose oxidoreductase domain-containing protein 2 (gfod2) from Xenopus tropicalis (Western clawed frog).